The primary structure comprises 49 residues: Large ribosomal subunit protein bL33A (49 aa).

The protein belongs to the bacterial ribosomal protein bL33 family.

This chain is Large ribosomal subunit protein bL33A, found in Lactobacillus delbrueckii subsp. bulgaricus (strain ATCC 11842 / DSM 20081 / BCRC 10696 / JCM 1002 / NBRC 13953 / NCIMB 11778 / NCTC 12712 / WDCM 00102 / Lb 14).